Consider the following 144-residue polypeptide: Benzoylsuccinyl-CoA thiolase subunit BbsA (144 aa).

Zn(2+) is bound by residues C40, C43, C54, and C57.

The protein belongs to the BbsA family. In terms of assembly, heterotetramer composed of two BbsA subunits and two BbsB subunits. BbsA forms homodimeric subcomplexes. Both BbsA and BbsB are essential for enzymatic activity.

It carries out the reaction (S)-2-benzoylsuccinyl-CoA + CoA = benzoyl-CoA + succinyl-CoA. It participates in xenobiotic degradation; toluene degradation. In terms of biological role, component of the BbsAB thiolase complex, which catalyzes the thiolytic cleavage of (S)-2-benzoylsuccinyl-CoA to succinyl-CoA and benzoyl-CoA, the final step of anaerobic toluene metabolism. The BbsA subunit critically contributes to an induced-fit process for productive binding of a CoA substrate into the active site of BbsB. The chain is Benzoylsuccinyl-CoA thiolase subunit BbsA from Thauera aromatica.